A 331-amino-acid chain; its full sequence is Eukaryotic translation initiation factor 2 subunit 2 (331 aa).

Disordered stretches follow at residues 1–75 (MSGD…DLNF) and 97–120 (AIKD…LDIM). Position 2 is an N-acetylserine (Ser2). Phosphoserine occurs at positions 2 and 13. Basic residues predominate over residues 13–22 (SKKKKKKKKP). Phosphothreonine is present on Thr36. A compositionally biased stretch (basic and acidic residues) spans 40-51 (ETKEVEPEPTEE). Ser67 carries the post-translational modification Phosphoserine. Residue Lys102 forms a Glycyl lysine isopeptide (Lys-Gly) (interchain with G-Cter in SUMO2) linkage. Ser105 bears the Phosphoserine mark. Residues 106–118 (DAQEPAEPEDDLD) are compositionally biased toward acidic residues. Residues Ser158 and Ser216 each carry the phosphoserine modification. 2 positions are modified to N6-acetyllysine: Lys263 and Lys291. The C4-type zinc-finger motif lies at 279-303 (CHTCRSPDTILQKDTRLYFLQCETC).

The protein belongs to the eIF-2-beta/eIF-5 family. As to quaternary structure, eukaryotic translation initiation factor 2 eIF2 is a heterotrimeric complex composed of an alpha (EIF2S1), a beta (EIF2S2) and a gamma (EIF2S3) chain. eIF2 is member of the 43S pre-initiation complex (43S PIC). eIF2 forms a complex with at least CELF1/CUGBP1, CALR, CALR3, EIF2S1, EIF2S2, HSP90B1 and HSPA5. Interacts with BZW2/5MP1. Interacts with EIF5.

The protein resides in the cytoplasm. Its subcellular location is the cytosol. Its function is as follows. Component of the eIF2 complex that functions in the early steps of protein synthesis by forming a ternary complex with GTP and initiator tRNA. This complex binds to a 40S ribosomal subunit, followed by mRNA binding to form the 43S pre-initiation complex (43S PIC). Junction of the 60S ribosomal subunit to form the 80S initiation complex is preceded by hydrolysis of the GTP bound to eIF2 and release of an eIF2-GDP binary complex. In order for eIF2 to recycle and catalyze another round of initiation, the GDP bound to eIF2 must exchange with GTP by way of a reaction catalyzed by eIF2B. The sequence is that of Eukaryotic translation initiation factor 2 subunit 2 (Eif2s2) from Mus musculus (Mouse).